We begin with the raw amino-acid sequence, 169 residues long: MISIDFINETDLKVKEWEDLAKQIINSGFKYLKLKNKINLSITFLDSEPAQKINQEYRNHSYIPDVTSFPIEMSPQEIKALGYQEIGDIFICIEEAERKSIKYDHSLKEEMGFLFTHGFLHLMGYDHETNEKDEEEMFFIQDEILKINKINYTIKFTEEDYKEIEEKDE.

Residues histidine 117, histidine 121, and histidine 127 each contribute to the Zn(2+) site.

Belongs to the endoribonuclease YbeY family. Requires Zn(2+) as cofactor.

It is found in the cytoplasm. Its function is as follows. Single strand-specific metallo-endoribonuclease involved in late-stage 70S ribosome quality control and in maturation of the 3' terminus of the 16S rRNA. This chain is Endoribonuclease YbeY, found in Mesoplasma florum (strain ATCC 33453 / NBRC 100688 / NCTC 11704 / L1) (Acholeplasma florum).